The sequence spans 1396 residues: G2/mitotic-specific cyclin-B3 (1396 aa).

Disordered regions lie at residues 1 to 64 (MPPP…TNAS), 259 to 398 (KEKP…PQME), and 477 to 500 (TTEKDPPSQWPSALPKKHISPGEL). Residues 10 to 34 (SKLETEKAQSNKITPREEQQSEKIG) are compositionally biased toward basic and acidic residues. The D-box signature appears at 54 to 62 (RSVFEDVTN). Over residues 264-273 (VKKPHFRKKK) the composition is skewed to basic residues. Residues 306 to 315 (LQENTNNKDA) show a composition bias toward polar residues. The residue at position 703 (serine 703) is a Phosphoserine. The disordered stretch occupies residues 775-796 (VDEPLSHQSPHIQNHSDTTKEA). Over residues 780–790 (SHQSPHIQNHS) the composition is skewed to polar residues.

The protein belongs to the cyclin family. Cyclin AB subfamily. Interacts with CDK2 kinase. Post-translationally, ubiquitinated. Ubiquitination leads to its degradation during anaphase entry, after degradation of CCNB1. As to expression, expressed in testis. Also expressed in the fetal ovary, but not in the adult.

It localises to the nucleus. Cyclins are positive regulatory subunits of the cyclin-dependent kinases (CDKs), and thereby play an essential role in the control of the cell cycle, notably via their destruction during cell division. Its tissue specificity suggest that it may be required during early meiotic prophase I. The sequence is that of G2/mitotic-specific cyclin-B3 (Ccnb3) from Mus musculus (Mouse).